Reading from the N-terminus, the 90-residue chain is Heat shock protein beta-7 (90 aa).

The region spanning 39-90 (PLTFPARPGGQGNIKTLGDAYEFTVDMRDFSPEDIIVTTSNNHIEVRAEKKP) is the sHSP domain.

The protein belongs to the small heat shock protein (HSP20) family. In terms of assembly, interacts with C-terminal domain of actin-binding protein 280. As to expression, found in both cardiac and skeletal muscle.

It localises to the cytoplasm. It is found in the nucleus. The protein localises to the cajal body. The chain is Heat shock protein beta-7 (Hspb7) from Rattus norvegicus (Rat).